Reading from the N-terminus, the 316-residue chain is tRNA dimethylallyltransferase (316 aa).

17–24 is a binding site for ATP; sequence GPTASGKT. 19-24 provides a ligand contact to substrate; sequence TASGKT. Interaction with substrate tRNA regions lie at residues 42–45, 166–170, and 247–252; these read DSAL, QRLSR, and RCVGYR.

This sequence belongs to the IPP transferase family. Monomer. The cofactor is Mg(2+).

The enzyme catalyses adenosine(37) in tRNA + dimethylallyl diphosphate = N(6)-dimethylallyladenosine(37) in tRNA + diphosphate. Its function is as follows. Catalyzes the transfer of a dimethylallyl group onto the adenine at position 37 in tRNAs that read codons beginning with uridine, leading to the formation of N6-(dimethylallyl)adenosine (i(6)A). In Salmonella enteritidis PT4 (strain P125109), this protein is tRNA dimethylallyltransferase.